The following is a 126-amino-acid chain: Large ribosomal subunit protein bL17 (126 aa).

It belongs to the bacterial ribosomal protein bL17 family. Part of the 50S ribosomal subunit. Contacts protein L32.

The protein is Large ribosomal subunit protein bL17 of Coxiella burnetii (strain CbuG_Q212) (Coxiella burnetii (strain Q212)).